The primary structure comprises 131 residues: Actin-associated protein FAM107A (131 aa).

Residues 57–77 (VLEHRRRNQLIKKKEEELEAK) adopt a coiled-coil conformation. Residues 61-71 (RRRNQLIKKKE) carry the Nuclear localization signal motif.

In terms of assembly, interacts with ACTB. Interacts with COMMD1; this interaction stabilizes COMMD1 in the nucleus. Interacts with MAP1A. Interacts with PRDX1. Interacts with F-actin.

It is found in the nucleus. It localises to the cytoplasm. The protein localises to the cytoskeleton. Its subcellular location is the stress fiber. The protein resides in the cell junction. It is found in the focal adhesion. It localises to the cell projection. The protein localises to the ruffle membrane. Its subcellular location is the synapse. Its function is as follows. Stress-inducible actin-binding protein that plays a role in synaptic and cognitive functions by modulating actin filamentous (F-actin) dynamics. Mediates polymerization of globular actin to F-actin. Also binds to, stabilizes and bundles F-actin. Involved in synaptic function by regulating neurite outgrowth in an actin-dependent manner and for the acquisition of hippocampus-dependent cognitive function, such as learning and long-term memory. Plays a role in the actin and microtubule cytoskeleton organization; negatively regulates focal adhesion (FA) assembly promoting malignant glial cell migration in an actin-, microtubule- and MAP1A-dependent manner. Also involved in neuroblastoma G1/S phase cell cycle progression and cell proliferation inhibition by stimulating ubiquitination of NF-kappa-B subunit RELA and NF-kappa-B degradation in a COMMD1- and actin-dependent manner. May play a role in tumor development. This is Actin-associated protein FAM107A from Rattus norvegicus (Rat).